The following is a 273-amino-acid chain: 4-hydroxy-tetrahydrodipicolinate reductase (273 aa).

NAD(+) contacts are provided by residues Gly-11–Met-16 and Gly-106–Thr-108. Residue His-162 is the Proton donor/acceptor of the active site. A (S)-2,3,4,5-tetrahydrodipicolinate-binding site is contributed by His-163. Lys-166 functions as the Proton donor in the catalytic mechanism. Gly-172 to Thr-173 serves as a coordination point for (S)-2,3,4,5-tetrahydrodipicolinate.

It belongs to the DapB family.

The protein resides in the cytoplasm. The catalysed reaction is (S)-2,3,4,5-tetrahydrodipicolinate + NAD(+) + H2O = (2S,4S)-4-hydroxy-2,3,4,5-tetrahydrodipicolinate + NADH + H(+). The enzyme catalyses (S)-2,3,4,5-tetrahydrodipicolinate + NADP(+) + H2O = (2S,4S)-4-hydroxy-2,3,4,5-tetrahydrodipicolinate + NADPH + H(+). Its pathway is amino-acid biosynthesis; L-lysine biosynthesis via DAP pathway; (S)-tetrahydrodipicolinate from L-aspartate: step 4/4. Its function is as follows. Catalyzes the conversion of 4-hydroxy-tetrahydrodipicolinate (HTPA) to tetrahydrodipicolinate. In Synechococcus elongatus (strain ATCC 33912 / PCC 7942 / FACHB-805) (Anacystis nidulans R2), this protein is 4-hydroxy-tetrahydrodipicolinate reductase.